Consider the following 562-residue polypeptide: MSEELAQGPKESPPAPRAGPREVWKKGGRLLSVLLAVNVLLLACTLISGGAFNKVAVYDTDVFALLTAMMLLATLWILFYLLRTVRCPCAVPYRDAHAGPIWLRGGLVLFGICTLIMDVFKTGYYSSFFECQSAIKILHPLIQAVFVIIQTYFLWVSAKDCVHVHLDLTWCGLMFTLTTNLAIWMAAVVDESVHQSHSYSSSHSNASHARLISDQHADNPVGGDSCLCSTAVCQIFQQGYFYLYPFNIEYSLFASTMLYVMWKNVGRFLASTPGHSHTPTPVSLFRETFFAGPVLGLLLFVVGLAVFIIYEVQVSGDGSRTRQALVIYYSFNIVCLGLTTLVSLSGSIIYRFDRRAMDHHKNPTRTLDVALLMGAALGQYAISYYSIVAVVAGTPQDLLAGLNLTHALLMIAQHTFQNMFIIESLHRGPPGAEPHSTHPKEPCQDLTFTNLDALHTLSACPPNPGLVSPSPSDQREAVAIVSTPRSQWRRQCLKDISLFLLLCNVILWIMPAFGARPHFSNTVEVDFYGYSLWAVIVNICLPFGIFYRMHAVSSLLEVYVLS.

Residues 1–20 (MSEELAQGPKESPPAPRAGP) form a disordered region. 12 helical membrane passes run 30-50 (LLSV…ISGG), 62-82 (VFAL…FYLL), 100-120 (PIWL…MDVF), 137-157 (ILHP…LWVS), 169-189 (TWCG…AAVV), 241-261 (FYLY…LYVM), 289-309 (FFAG…VFII), 324-344 (ALVI…LVSL), 371-391 (LLMG…VAVV), 402-422 (LNLT…MFII), 495-515 (DISL…AFGA), and 527-547 (FYGY…GIFY).

This sequence belongs to the otopetrin family.

It is found in the cell membrane. The catalysed reaction is H(+)(in) = H(+)(out). Its activity is regulated as follows. Actives at neutral and alkaline extracellular pH, acid extracellular pH appears to inhibit the channel. Insensitive to activation by Zn(2+). Its function is as follows. Proton-selective ion channel open at neutral pH. Actives at neutral and alkaline extracellular pH, likely participates in some alkali-related physiological activities. This chain is Proton channel OTOP2, found in Homo sapiens (Human).